The chain runs to 141 residues: Large ribosomal subunit protein uL11 (141 aa).

The protein belongs to the universal ribosomal protein uL11 family. Part of the ribosomal stalk of the 50S ribosomal subunit. Interacts with L10 and the large rRNA to form the base of the stalk. L10 forms an elongated spine to which L12 dimers bind in a sequential fashion forming a multimeric L10(L12)X complex. In terms of processing, one or more lysine residues are methylated.

Forms part of the ribosomal stalk which helps the ribosome interact with GTP-bound translation factors. The sequence is that of Large ribosomal subunit protein uL11 from Geobacillus sp. (strain WCH70).